We begin with the raw amino-acid sequence, 209 residues long: Outer-membrane lipoprotein carrier protein (209 aa).

Positions 1-24 (MTRYVISRLSAIALLALAPALALA) are cleaved as a signal peptide.

This sequence belongs to the LolA family. As to quaternary structure, monomer.

Its subcellular location is the periplasm. Its function is as follows. Participates in the translocation of lipoproteins from the inner membrane to the outer membrane. Only forms a complex with a lipoprotein if the residue after the N-terminal Cys is not an aspartate (The Asp acts as a targeting signal to indicate that the lipoprotein should stay in the inner membrane). This chain is Outer-membrane lipoprotein carrier protein, found in Bordetella avium (strain 197N).